Consider the following 776-residue polypeptide: Genome polyprotein (776 aa).

The segment at M1–R27 is disordered. The Cytoplasmic portion of the chain corresponds to M1–T98. A compositionally biased stretch (basic residues) spans R17 to R27. The tract at residues M33–L68 is hydrophobic; homodimerization of capsid protein C. Residues T97–A117 constitute a propeptide, ER anchor for the protein C, removed in mature form by serine protease NS3. Residues I99–A117 form a helical membrane-spanning segment. At T118–W242 the chain is on the extracellular side. N-linked (GlcNAc...) asparagine; by host glycosylation is present at N144. A helical transmembrane segment spans residues K243–D260. Position 261 (G261) is a topological domain, cytoplasmic. A helical transmembrane segment spans residues L262–A280. The Extracellular portion of the chain corresponds to S281–T727. 4 cysteine pairs are disulfide-bonded: C283–C310, C340–C396, C354–C385, and C372–C401. N-linked (GlcNAc...) asparagine; by host glycosylation occurs at N434. Cystine bridges form between C466-C570 and C587-C618. An intramembrane region (helical) is located at residues L728–G748. Over L749 to T755 the chain is Extracellular. An intramembrane region (helical) is located at residues L756–A776.

In terms of processing, specific enzymatic cleavages in vivo yield mature proteins Peptide 2K acts as a signal sequence and is removed from the N-terminus of NS4B by the host signal peptidase in the ER lumen. Signal cleavage at the 2K-4B site requires a prior NS3 protease-mediated cleavage at the 4A-2K site.

Its subcellular location is the virion. The protein localises to the secreted. The protein resides in the virion membrane. It localises to the host endoplasmic reticulum membrane. Its function is as follows. Capsid protein C self-assembles to form an icosahedral capsid about 30 nm in diameter. The capsid encapsulates the genomic RNA. In terms of biological role, prM acts as a chaperone for envelope protein E during intracellular virion assembly by masking and inactivating envelope protein E fusion peptide. prM is matured in the last step of virion assembly, presumably to avoid catastrophic activation of the viral fusion peptide induced by the acidic pH of the trans-Golgi network. After cleavage by host furin, the pr peptide is released in the extracellular medium and small envelope protein M and envelope protein E homodimers are dissociated. Functionally, envelope protein E binding to host cell surface receptor is followed by virus internalization through clathrin-mediated endocytosis. Envelope protein E is subsequently involved in membrane fusion between virion and host late endosomes. Synthesized as a homodimer with prM which acts as a chaperone for envelope protein E. After cleavage of prM, envelope protein E dissociate from small envelope protein M and homodimerizes. This Homo sapiens (Human) protein is Genome polyprotein.